The following is a 165-amino-acid chain: Glutamyl-tRNA(Gln) amidotransferase subunit F, mitochondrial (165 aa).

Residues 1–19 constitute a mitochondrion transit peptide; it reads MKSILRSTTRNLITSSRRF.

This sequence belongs to the GatF family. As to quaternary structure, subunit of the heterotrimeric GatFAB amidotransferase (AdT) complex, composed of A, B and F subunits.

It is found in the mitochondrion inner membrane. The enzyme catalyses L-glutamyl-tRNA(Gln) + L-glutamine + ATP + H2O = L-glutaminyl-tRNA(Gln) + L-glutamate + ADP + phosphate + H(+). In terms of biological role, allows the formation of correctly charged Gln-tRNA(Gln) through the transamidation of misacylated Glu-tRNA(Gln) in the mitochondria. The reaction takes place in the presence of glutamine and ATP through an activated gamma-phospho-Glu-tRNA(Gln). Required for proper protein synthesis within the mitochondrion. The chain is Glutamyl-tRNA(Gln) amidotransferase subunit F, mitochondrial from Candida albicans (strain WO-1) (Yeast).